The primary structure comprises 354 residues: MRATPLAASADVSCRKKPLEFDDNIDAKCPVLKRVRDEPEPGPLPSLLPPSPPPASDLSPAVAPATRLGPYILLEREQGSCSYRALHCPTGTEYTCKVYPASEAQAVLAPYARLPTHQHVARPTEVLLGSRLLYIFFTKTHGDLHSLVRSRRGIPESEAAGLFRQMASAVAHCHKHGLVLRDLKLRRFVFSNCERTKLVLENLEDACVMTGSDDSLWDKHACPAYVGPEILSSRPSYSGKAADVWSLGVALFTMLAGRYPFHDSEPVLLFGKIRRGTFALPEGLSAPARCLIRCLLRKEPSERLVALGILLHPWLREDHGRVSPPQSDRREMDQVVPDGPQLEEAEEGEVGLYG.

Residues 1–127 (MRATPLAASA…QHVARPTEVL (127 aa)) are interaction with DDIT3/CHOP. Positions 36-61 (RDEPEPGPLPSLLPPSPPPASDLSPA) are disordered. The segment covering 41–55 (PGPLPSLLPPSPPPA) has biased composition (pro residues). A Protein kinase domain is found at 68 to 315 (LGPYILLERE…ALGILLHPWL (248 aa)). Positions 320 to 333 (GRVSPPQSDRREMD) are enriched in basic and acidic residues. The disordered stretch occupies residues 320–354 (GRVSPPQSDRREMDQVVPDGPQLEEAEEGEVGLYG). Positions 341–354 (QLEEAEEGEVGLYG) are enriched in acidic residues.

This sequence belongs to the protein kinase superfamily. CAMK Ser/Thr protein kinase family. Tribbles subfamily. Interacts with AKT1, AKT2, MAP2K1 and MAP2K7. Interacts with ATF4. Interacts with DDIT3/CHOP and inhibits its interaction with EP300/P300. Interacts with APOBEC3C. Interacts (via N-terminus) with APOBEC3A. Interacts with RELA. In terms of tissue distribution, highly expressed in liver. Not detected in heart, brain, spleen, lung, skeletal muscle, kidney or testis.

The protein resides in the nucleus. Its function is as follows. Inactive protein kinase which acts as a regulator of the integrated stress response (ISR), a process for adaptation to various stress. Inhibits the transcriptional activity of DDIT3/CHOP and is involved in DDIT3/CHOP-dependent cell death during ER stress. May play a role in programmed neuronal cell death but does not appear to affect non-neuronal cells. Acts as a negative feedback regulator of the ATF4-dependent transcription during the ISR: while TRIB3 expression is promoted by ATF4, TRIB3 protein interacts with ATF4 and inhibits ATF4 transcription activity. Disrupts insulin signaling by binding directly to Akt kinases and blocking their activation. May bind directly to and mask the 'Thr-308' phosphorylation site in AKT1. Interacts with the NF-kappa-B transactivator p65 RELA and inhibits its phosphorylation and thus its transcriptional activation activity. Interacts with MAPK kinases and regulates activation of MAP kinases. Can inhibit APOBEC3A editing of nuclear DNA. The sequence is that of Tribbles homolog 3 (Trib3) from Mus musculus (Mouse).